The chain runs to 611 residues: Threonine--tRNA ligase (611 aa).

Positions 209–502 are catalytic; sequence DHRRLGKDLE…MTENYAGDFP (294 aa). Zn(2+) contacts are provided by Cys302, His353, and His479.

Belongs to the class-II aminoacyl-tRNA synthetase family. As to quaternary structure, homodimer. The cofactor is Zn(2+).

It localises to the cytoplasm. The catalysed reaction is tRNA(Thr) + L-threonine + ATP = L-threonyl-tRNA(Thr) + AMP + diphosphate + H(+). In terms of biological role, catalyzes the attachment of threonine to tRNA(Thr) in a two-step reaction: L-threonine is first activated by ATP to form Thr-AMP and then transferred to the acceptor end of tRNA(Thr). Also edits incorrectly charged L-seryl-tRNA(Thr). This Synechococcus sp. (strain CC9902) protein is Threonine--tRNA ligase.